The chain runs to 364 residues: MQERHTEQDYRALLIADTPIIDVRAPIEFEQGAMPAAINLPLMNNDERAAVGTCYKQQGSDAALALGHKLVAGEIRQQRMDAWRAACLQNPQGILCCARGGQRSHIVQSWLHAAGIDYPLVEGGYKALRQTAIQATIELAQKPIVLIGGCTGSGKTLLVQQQPNGVDLEGLARHRGSAFGRTLQPQLSQASFENLLAAEMLKTDARQNLRLWVLEDESRMIGSNHLPECLRERMTQAAIAVVEDPFEIRLERLNEEYFLRMHHDFTHAYGDEQGWQEYCEYLHHGLSAIKRRLGLQRYNELAAQLDTALTTQLTTGSTDGHLAWLVPLLKEYYDPMYRYQLEKKAEKVVFRGEWAEVAEWVKAQ.

The region spanning 14-137 (LIADTPIIDV…LRQTAIQATI (124 aa)) is the Rhodanese domain. The S-selanylcysteine intermediate role is filled by Cys97.

It belongs to the SelU family. As to quaternary structure, monomer.

The enzyme catalyses 5-methylaminomethyl-2-thiouridine(34) in tRNA + selenophosphate + (2E)-geranyl diphosphate + H2O + H(+) = 5-methylaminomethyl-2-selenouridine(34) in tRNA + (2E)-thiogeraniol + phosphate + diphosphate. It carries out the reaction 5-methylaminomethyl-2-thiouridine(34) in tRNA + (2E)-geranyl diphosphate = 5-methylaminomethyl-S-(2E)-geranyl-thiouridine(34) in tRNA + diphosphate. It catalyses the reaction 5-methylaminomethyl-S-(2E)-geranyl-thiouridine(34) in tRNA + selenophosphate + H(+) = 5-methylaminomethyl-2-(Se-phospho)selenouridine(34) in tRNA + (2E)-thiogeraniol. The catalysed reaction is 5-methylaminomethyl-2-(Se-phospho)selenouridine(34) in tRNA + H2O = 5-methylaminomethyl-2-selenouridine(34) in tRNA + phosphate. Its function is as follows. Involved in the post-transcriptional modification of the uridine at the wobble position (U34) of tRNA(Lys), tRNA(Glu) and tRNA(Gln). Catalyzes the conversion of 2-thiouridine (S2U-RNA) to 2-selenouridine (Se2U-RNA). Acts in a two-step process involving geranylation of 2-thiouridine (S2U) to S-geranyl-2-thiouridine (geS2U) and subsequent selenation of the latter derivative to 2-selenouridine (Se2U) in the tRNA chain. The protein is tRNA 2-selenouridine synthase of Escherichia coli (strain ATCC 8739 / DSM 1576 / NBRC 3972 / NCIMB 8545 / WDCM 00012 / Crooks).